We begin with the raw amino-acid sequence, 124 residues long: Small ribosomal subunit protein uS12 (124 aa).

Asp89 carries the post-translational modification 3-methylthioaspartic acid.

Belongs to the universal ribosomal protein uS12 family. As to quaternary structure, part of the 30S ribosomal subunit. Contacts proteins S8 and S17. May interact with IF1 in the 30S initiation complex.

Functionally, with S4 and S5 plays an important role in translational accuracy. Its function is as follows. Interacts with and stabilizes bases of the 16S rRNA that are involved in tRNA selection in the A site and with the mRNA backbone. Located at the interface of the 30S and 50S subunits, it traverses the body of the 30S subunit contacting proteins on the other side and probably holding the rRNA structure together. The combined cluster of proteins S8, S12 and S17 appears to hold together the shoulder and platform of the 30S subunit. This chain is Small ribosomal subunit protein uS12, found in Koribacter versatilis (strain Ellin345).